A 130-amino-acid polypeptide reads, in one-letter code: Small ribosomal subunit protein uS9 (130 aa).

The protein belongs to the universal ribosomal protein uS9 family.

The chain is Small ribosomal subunit protein uS9 from Hamiltonella defensa subsp. Acyrthosiphon pisum (strain 5AT).